We begin with the raw amino-acid sequence, 81 residues long: Metallocarboxypeptidase inhibitor (81 aa).

The signal sequence occupies residues M1–S15. Cystine bridges form between C25–C48, C32–C76, C33–C57, and C36–C72.

Functionally, tightly binding, competitive inhibitor of different types of pancreatic-like carboxypeptidases. Inhibits human CPA4. The chain is Metallocarboxypeptidase inhibitor from Hirudo medicinalis (Medicinal leech).